The following is a 124-amino-acid chain: Large ribosomal subunit protein uL18 (124 aa).

This sequence belongs to the universal ribosomal protein uL18 family. As to quaternary structure, part of the 50S ribosomal subunit; part of the 5S rRNA/L5/L18/L25 subcomplex. Contacts the 5S and 23S rRNAs.

Its function is as follows. This is one of the proteins that bind and probably mediate the attachment of the 5S RNA into the large ribosomal subunit, where it forms part of the central protuberance. The protein is Large ribosomal subunit protein uL18 of Orientia tsutsugamushi (strain Ikeda) (Rickettsia tsutsugamushi).